Reading from the N-terminus, the 136-residue chain is uncharacterized protein (136 aa).

A signal peptide spans Met1–Ser35.

This is an uncharacterized protein from Saccharomyces cerevisiae (strain ATCC 204508 / S288c) (Baker's yeast).